Here is a 335-residue protein sequence, read N- to C-terminus: MAAPIGVPLLVRGGCQRILSSPLNHIYLHKRSGSQQRRHFFFWRQRDISHSVVSPAAVSPAHPVPKRIKKPDYVTTGIVPDWGDSIEVKDEDQIQGLREACRLARHVLLLAGKSLKVDMTTEEIDALVHWEIIRHDAYPSPLGYGRFPKSVCTSVNNVLCHGIPDSRPLQDGDIINIDVTVYYNGYHGDTSETFLVGNVDESGKKLVEVARRCRDEAIAACRAGAPFSVIGNTISRITHQNGLQVCPHFVGHGIGSYFHGHPEIWHHANDNDLPMEEGMAFTIEPIITEGSPEFKVLEDAWTVVSLDNQRSAQFEHTVLITPRGVEILTKLPQEA.

Residues 1–19 constitute a mitochondrion transit peptide; the sequence is MAAPIGVPLLVRGGCQRIL. H161 provides a ligand contact to substrate. D178, D189, and H252 together coordinate a divalent metal cation. H259 lines the substrate pocket. Positions 284 and 315 each coordinate a divalent metal cation.

The protein belongs to the peptidase M24A family. Methionine aminopeptidase type 1 subfamily. Co(2+) serves as cofactor. Requires Zn(2+) as cofactor. Mn(2+) is required as a cofactor. The cofactor is Fe(2+).

The protein localises to the mitochondrion. The enzyme catalyses Release of N-terminal amino acids, preferentially methionine, from peptides and arylamides.. Functionally, removes the N-terminal methionine from nascent proteins. The N-terminal methionine is often cleaved when the second residue in the primary sequence is small and uncharged (Met-Ala-, Cys, Gly, Pro, Ser, Thr, or Val). Requires deformylation of the N(alpha)-formylated initiator methionine before it can be hydrolyzed. The sequence is that of Methionine aminopeptidase 1D, mitochondrial (Metap1d) from Mus musculus (Mouse).